Here is a 273-residue protein sequence, read N- to C-terminus: Translation initiation factor 2 subunit alpha (273 aa).

Residues 12–83 (GEFVVATVKN…EKGHIDLSLK (72 aa)) form the S1 motif domain.

The protein belongs to the eIF-2-alpha family. As to quaternary structure, heterotrimer composed of an alpha, a beta and a gamma chain.

Its function is as follows. eIF-2 functions in the early steps of protein synthesis by forming a ternary complex with GTP and initiator tRNA. In Thermococcus gammatolerans (strain DSM 15229 / JCM 11827 / EJ3), this protein is Translation initiation factor 2 subunit alpha.